A 967-amino-acid polypeptide reads, in one-letter code: Leucine--tRNA ligase (967 aa).

The short motif at 43 to 53 is the 'HIGH' region element; sequence PYLSGHLHVGH. The short motif at 650-654 is the 'KMSKS' region element; sequence KMSKS. Residue K653 participates in ATP binding.

This sequence belongs to the class-I aminoacyl-tRNA synthetase family.

It is found in the cytoplasm. It catalyses the reaction tRNA(Leu) + L-leucine + ATP = L-leucyl-tRNA(Leu) + AMP + diphosphate. This chain is Leucine--tRNA ligase, found in Pyrococcus abyssi (strain GE5 / Orsay).